Reading from the N-terminus, the 543-residue chain is Chaperonin GroEL (543 aa).

ATP is bound by residues 29–32 (TLGP), 86–90 (DGTTT), G413, 478–480 (NAA), and D494.

It belongs to the chaperonin (HSP60) family. As to quaternary structure, forms a cylinder of 14 subunits composed of two heptameric rings stacked back-to-back. Interacts with the co-chaperonin GroES.

It localises to the cytoplasm. It carries out the reaction ATP + H2O + a folded polypeptide = ADP + phosphate + an unfolded polypeptide.. In terms of biological role, together with its co-chaperonin GroES, plays an essential role in assisting protein folding. The GroEL-GroES system forms a nano-cage that allows encapsulation of the non-native substrate proteins and provides a physical environment optimized to promote and accelerate protein folding. This Lactobacillus johnsonii (strain CNCM I-12250 / La1 / NCC 533) protein is Chaperonin GroEL.